Consider the following 173-residue polypeptide: Large ribosomal subunit protein uL15 (173 aa).

The segment covering 1–11 has biased composition (basic and acidic residues); that stretch reads MKLNEIRDNQG. Residues 1–50 form a disordered region; the sequence is MKLNEIRDNQGARKSRVRVGRGIGSGLGKTGGRGQKGQKSRSGVSINGFE. Over residues 21-35 the composition is skewed to gly residues; it reads RGIGSGLGKTGGRGQ.

This sequence belongs to the universal ribosomal protein uL15 family. In terms of assembly, part of the 50S ribosomal subunit.

Its function is as follows. Binds to the 23S rRNA. This Rhizorhabdus wittichii (strain DSM 6014 / CCUG 31198 / JCM 15750 / NBRC 105917 / EY 4224 / RW1) (Sphingomonas wittichii) protein is Large ribosomal subunit protein uL15.